A 749-amino-acid polypeptide reads, in one-letter code: Probable galactinol--sucrose galactosyltransferase 6 (749 aa).

It belongs to the glycosyl hydrolases 36 family.

It carries out the reaction alpha-D-galactosyl-(1-&gt;3)-1D-myo-inositol + sucrose = raffinose + myo-inositol. In terms of biological role, transglycosidase operating by a ping-pong reaction mechanism. Involved in the synthesis of raffinose, a major soluble carbohydrate in seeds, roots and tubers. This Arabidopsis thaliana (Mouse-ear cress) protein is Probable galactinol--sucrose galactosyltransferase 6 (RFS6).